The primary structure comprises 59 residues: Large ribosomal subunit protein bL32 (59 aa).

The tract at residues 1 to 21 is disordered; the sequence is MAVPKKKSSKSKGRSRAAHHA.

It belongs to the bacterial ribosomal protein bL32 family.

This Magnetococcus marinus (strain ATCC BAA-1437 / JCM 17883 / MC-1) protein is Large ribosomal subunit protein bL32.